We begin with the raw amino-acid sequence, 207 residues long: Putative 3-methyladenine DNA glycosylase (207 aa).

This sequence belongs to the DNA glycosylase MPG family.

This chain is Putative 3-methyladenine DNA glycosylase, found in Burkholderia orbicola (strain MC0-3).